We begin with the raw amino-acid sequence, 215 residues long: Probable maleylacetoacetate isomerase (215 aa).

Positions 2–85 constitute a GST N-terminal domain; sequence MSLILYGYWR…YLDETYPAPR (84 aa). One can recognise a GST C-terminal domain in the interval 90-215; that stretch reads RGAERYQVKA…AAPENQPDAC (126 aa).

The protein belongs to the GST superfamily. Zeta family.

The catalysed reaction is 4-maleylacetoacetate = 4-fumarylacetoacetate. It functions in the pathway amino-acid degradation; L-phenylalanine degradation; acetoacetate and fumarate from L-phenylalanine: step 5/6. This is Probable maleylacetoacetate isomerase (maiA) from Vibrio cholerae serotype O1 (strain ATCC 39315 / El Tor Inaba N16961).